We begin with the raw amino-acid sequence, 427 residues long: Pre-mRNA-splicing factor PRP46 (427 aa).

WD repeat units follow at residues 113–153, 156–195, 198–237, 240–281, 283–322, 324–362, and 373–412; these read GHHG…LKVT, AHDMTVRDLAISNRHPYMFSVSEDKTVKCWDLEKNTAIRN, GHLSGVHTVDIHPTVDVVVTAGRDSVVKVWDIRTRLPVMT, GHKG…KVLT, HQRTVRDISVHPSEFSFASACTNDIRSWLLPKGELLTNFV, QDLDVINTVSINQDDVLFAGSDNGSLTFFDYKSGHKYQT, and ESERGILSSTFDGTGLRLLTGETDRTIKIWKQDETASQDT. Residues 404 to 427 form a disordered region; the sequence is QDETASQDTHPNLPWNPKLDSQRL.

Belongs to the WD repeat PRL1/PRL2 family. Associated with the spliceosome.

Its subcellular location is the cytoplasm. It is found in the nucleus. Involved in pre-mRNA splicing and required for cell cycle progression at G2/M. The sequence is that of Pre-mRNA-splicing factor PRP46 (PRP46) from Candida glabrata (strain ATCC 2001 / BCRC 20586 / JCM 3761 / NBRC 0622 / NRRL Y-65 / CBS 138) (Yeast).